A 464-amino-acid polypeptide reads, in one-letter code: UDP-N-acetylmuramoylalanine--D-glutamate ligase (464 aa).

112–118 (GTDGKTT) provides a ligand contact to ATP.

This sequence belongs to the MurCDEF family.

It localises to the cytoplasm. It catalyses the reaction UDP-N-acetyl-alpha-D-muramoyl-L-alanine + D-glutamate + ATP = UDP-N-acetyl-alpha-D-muramoyl-L-alanyl-D-glutamate + ADP + phosphate + H(+). It participates in cell wall biogenesis; peptidoglycan biosynthesis. Functionally, cell wall formation. Catalyzes the addition of glutamate to the nucleotide precursor UDP-N-acetylmuramoyl-L-alanine (UMA). In Chlorobium phaeobacteroides (strain DSM 266 / SMG 266 / 2430), this protein is UDP-N-acetylmuramoylalanine--D-glutamate ligase.